The primary structure comprises 278 residues: 3-methyl-2-oxobutanoate hydroxymethyltransferase (278 aa).

Residues aspartate 52 and aspartate 91 each coordinate Mg(2+). 3-methyl-2-oxobutanoate is bound by residues 52-53 (DS), aspartate 91, and lysine 121. Glutamate 123 contacts Mg(2+). The active-site Proton acceptor is the glutamate 190.

This sequence belongs to the PanB family. As to quaternary structure, homodecamer; pentamer of dimers. Mg(2+) serves as cofactor.

Its subcellular location is the cytoplasm. It carries out the reaction 3-methyl-2-oxobutanoate + (6R)-5,10-methylene-5,6,7,8-tetrahydrofolate + H2O = 2-dehydropantoate + (6S)-5,6,7,8-tetrahydrofolate. It functions in the pathway cofactor biosynthesis; (R)-pantothenate biosynthesis; (R)-pantoate from 3-methyl-2-oxobutanoate: step 1/2. Catalyzes the reversible reaction in which hydroxymethyl group from 5,10-methylenetetrahydrofolate is transferred onto alpha-ketoisovalerate to form ketopantoate. The chain is 3-methyl-2-oxobutanoate hydroxymethyltransferase from Rhodospirillum rubrum (strain ATCC 11170 / ATH 1.1.1 / DSM 467 / LMG 4362 / NCIMB 8255 / S1).